The chain runs to 463 residues: Pentatricopeptide repeat-containing protein At2g17670 (463 aa).

Residues 1-63 (MGKVPSSFRS…PSLRNPFKSP (63 aa)) are disordered. 9 PPR repeats span residues 121–157 (GRST…GLEP), 158–192 (DQVT…HSPP), 193–223 (DTYT…MRDD), 229–263 (DLVS…GFKP), 264–298 (DCFL…GVEP), 299–333 (DQIT…GYEP), 334–368 (DTAT…GCAP), 369–403 (NDCT…GVKL), and 404–438 (ESNG…KSLS).

Belongs to the PPR family. P subfamily.

This Arabidopsis thaliana (Mouse-ear cress) protein is Pentatricopeptide repeat-containing protein At2g17670.